Consider the following 470-residue polypeptide: Fumarate hydratase class II (470 aa).

Substrate-binding positions include 99–101 (SGT), 129–132 (HPND), 139–141 (SSN), and Thr187. His188 serves as the catalytic Proton donor/acceptor. Ser318 is a catalytic residue. Residues Ser319 and 324-326 (KIN) contribute to the substrate site.

The protein belongs to the class-II fumarase/aspartase family. Fumarase subfamily. In terms of assembly, homotetramer.

It is found in the cytoplasm. It carries out the reaction (S)-malate = fumarate + H2O. It participates in carbohydrate metabolism; tricarboxylic acid cycle; (S)-malate from fumarate: step 1/1. Its function is as follows. Involved in the TCA cycle. Catalyzes the stereospecific interconversion of fumarate to L-malate. This chain is Fumarate hydratase class II, found in Halobacterium salinarum (strain ATCC 700922 / JCM 11081 / NRC-1) (Halobacterium halobium).